A 555-amino-acid polypeptide reads, in one-letter code: uncharacterized protein (555 aa).

Residues 1-28 form the signal peptide; sequence MRSGLFGVLRWTAVGLVATLVASLALTA. Cys29 carries N-palmitoyl cysteine lipidation. The S-diacylglycerol cysteine moiety is linked to residue Cys29.

This sequence to M.tuberculosis Rv2585c and M.bovis Mb2616c.

The protein localises to the cell membrane. This is an uncharacterized protein from Mycobacterium leprae (strain TN).